The sequence spans 347 residues: Single-pass membrane and coiled-coil domain-containing protein 2 (347 aa).

A disordered region spans residues 1–89; that stretch reads MMSLQLGTAG…PPSKPDEQEV (89 aa). 3 stretches are compositionally biased toward basic and acidic residues: residues 10-21, 36-51, and 60-86; these read GKERQLAEKSRD, EMDHISDRPDEKDKPS, and YKMDTEKWDGLEQESEHSQDPPSKPDE. Residues 139–238 are a coiled coil; the sequence is DWLERINNII…MNVLNSKLEM (100 aa). Phosphoserine is present on Ser-178. The segment at 243 to 274 is disordered; sequence GSDADSHNSEDVDTEQEEPLVPEASPSLSASP. The span at 253–262 shows a compositional bias: acidic residues; that stretch reads DVDTEQEEPL. Low complexity predominate over residues 263-273; the sequence is VPEASPSLSAS. Residues 288–308 form a helical membrane-spanning segment; sequence LFVIVYVVTITGLSCYILFVD.

The protein resides in the membrane. In Mus musculus (Mouse), this protein is Single-pass membrane and coiled-coil domain-containing protein 2 (Smco2).